The sequence spans 410 residues: BRCA1-A complex subunit Abraxas 1 (410 aa).

The MPN domain occupies 7-160; that stretch reads TAVLSGFVLG…HALYKPQKGL (154 aa). Position 48 is a phosphoserine (S48). The stretch at 208-261 forms a coiled coil; it reads SLKEVQKINEMYTSLQDELKSICEKVEHSERAVEKLLNDVNRLKGEIKKRKQAQ. A disordered region spans residues 354–410; that stretch reads DGWQFKKSRLGGIQNRPSKTDTNSSNQEQASTVSSPETDEEIERMKGSGEYPQSPTF. Residues 368–389 are compositionally biased toward polar residues; sequence NRPSKTDTNSSNQEQASTVSSP. S387 and S388 each carry phosphoserine. A Phosphothreonine modification is found at T391. S407 is subject to Phosphoserine. The pSXXF motif motif lies at 407-410; sequence SPTF.

Belongs to the FAM175 family. Abraxas subfamily. Component of the ARISC complex, at least composed of UIMC1/RAP80, ABRAXAS1, BRCC3/BRCC36, BABAM2 and BABAM1/NBA1. Component of the BRCA1-A complex, at least composed of the BRCA1, BARD1, UIMC1/RAP80, ABRAXAS1, BRCC3/BRCC36, BABAM2 and BABAM1/NBA1. In the complex, interacts directly with UIMC1/RAP80, BRCC3/BRCC36 and BABAM2. Homodimer. Interacts directly (when phosphorylated at Ser-407) with BRCA1. The phosphorylated homodimer can interact directly with two BRCA1 chains, giving rise to a heterotetramer. Binds polyubiquitin. In terms of processing, phosphorylation of Ser-407 of the pSXXF motif by ATM or ATR constitutes a specific recognition motif for the BRCT domain of BRCA1.

The protein resides in the nucleus. Functionally, involved in DNA damage response and double-strand break (DSB) repair. Component of the BRCA1-A complex, acting as a central scaffold protein that assembles the various components of the complex and mediates the recruitment of BRCA1. The BRCA1-A complex specifically recognizes 'Lys-63'-linked ubiquitinated histones H2A and H2AX at DNA lesion sites, leading to target the BRCA1-BARD1 heterodimer to sites of DNA damage at DSBs. This complex also possesses deubiquitinase activity that specifically removes 'Lys-63'-linked ubiquitin on histones H2A and H2AX. This Bos taurus (Bovine) protein is BRCA1-A complex subunit Abraxas 1.